The following is a 347-amino-acid chain: Selenide, water dikinase (347 aa).

The active site involves C17. ATP is bound by residues K20 and 48-50 (TRD). A Mg(2+)-binding site is contributed by D51. Residues D68, D91, and 139 to 141 (GHS) contribute to the ATP site. Position 91 (D91) interacts with Mg(2+). Residue D227 participates in Mg(2+) binding.

Belongs to the selenophosphate synthase 1 family. Class I subfamily. Homodimer. Requires Mg(2+) as cofactor.

It catalyses the reaction hydrogenselenide + ATP + H2O = selenophosphate + AMP + phosphate + 2 H(+). Its function is as follows. Synthesizes selenophosphate from selenide and ATP. The sequence is that of Selenide, water dikinase from Escherichia coli O157:H7.